The sequence spans 229 residues: Putative N-acetylmannosamine-6-phosphate 2-epimerase (229 aa).

It belongs to the NanE family.

The catalysed reaction is an N-acyl-D-glucosamine 6-phosphate = an N-acyl-D-mannosamine 6-phosphate. Its pathway is amino-sugar metabolism; N-acetylneuraminate degradation; D-fructose 6-phosphate from N-acetylneuraminate: step 3/5. Functionally, converts N-acetylmannosamine-6-phosphate (ManNAc-6-P) to N-acetylglucosamine-6-phosphate (GlcNAc-6-P). This Pediococcus pentosaceus (strain ATCC 25745 / CCUG 21536 / LMG 10740 / 183-1w) protein is Putative N-acetylmannosamine-6-phosphate 2-epimerase.